We begin with the raw amino-acid sequence, 30 residues long: Cyclotide hyen-D (30 aa).

The segment at residues 1-30 (GFPCGESCVYIPCFTAAIGCSCKSKVCYKN) is a cross-link (cyclopeptide (Gly-Asn)). 3 disulfides stabilise this stretch: C4-C20, C8-C22, and C13-C27.

Post-translationally, this is a cyclic peptide. Detected in stems (at protein level).

Its function is as follows. Probably participates in a plant defense mechanism. Has strong cytotoxic activity against HUVEC cells (LC(50)= 0.58 uM) and various cancer cells including HeLa (LC(50)= 0.48 uM), MCF-7 and K562. Also displays some hemolytic activity. Binds to and induces leakage in phospholipd membranes, particularly ones containing 1-palmitoyl-2-oleophosphatidylethanolamine (POPE). The sequence is that of Cyclotide hyen-D from Pigea enneasperma (Spade flower).